A 493-amino-acid polypeptide reads, in one-letter code: GTPase Der (493 aa).

2 consecutive EngA-type G domains span residues 3–166 and 207–380; these read PVVA…SGKG and LKLA…DCAT. GTP contacts are provided by residues 9–16, 56–60, 118–121, 213–220, 260–264, and 325–328; these read GRPNVGKS, DTGGI, NKTD, GKPNVGKS, DTAGV, and NKWD. Residues 381 to 465 form the KH-like domain; sequence RRVNTSLLTR…PIRIQFKEGA (85 aa).

This sequence belongs to the TRAFAC class TrmE-Era-EngA-EngB-Septin-like GTPase superfamily. EngA (Der) GTPase family. In terms of assembly, associates with the 50S ribosomal subunit.

In terms of biological role, GTPase that plays an essential role in the late steps of ribosome biogenesis. This is GTPase Der from Photorhabdus laumondii subsp. laumondii (strain DSM 15139 / CIP 105565 / TT01) (Photorhabdus luminescens subsp. laumondii).